Consider the following 282-residue polypeptide: Pantothenate synthetase (282 aa).

30 to 37 (MGYLHQGH) lines the ATP pocket. Histidine 37 serves as the catalytic Proton donor. (R)-pantoate is bound at residue glutamine 61. Glutamine 61 contacts beta-alanine. ATP is bound at residue 147–150 (GQKD). (R)-pantoate is bound at residue glutamine 153. ATP is bound by residues valine 176 and 184 to 187 (MSSR).

This sequence belongs to the pantothenate synthetase family. In terms of assembly, homodimer.

The protein localises to the cytoplasm. It carries out the reaction (R)-pantoate + beta-alanine + ATP = (R)-pantothenate + AMP + diphosphate + H(+). It participates in cofactor biosynthesis; (R)-pantothenate biosynthesis; (R)-pantothenate from (R)-pantoate and beta-alanine: step 1/1. Catalyzes the condensation of pantoate with beta-alanine in an ATP-dependent reaction via a pantoyl-adenylate intermediate. In Geotalea daltonii (strain DSM 22248 / JCM 15807 / FRC-32) (Geobacter daltonii), this protein is Pantothenate synthetase.